A 122-amino-acid polypeptide reads, in one-letter code: Large ribosomal subunit protein uL14 (122 aa).

This sequence belongs to the universal ribosomal protein uL14 family. As to quaternary structure, part of the 50S ribosomal subunit. Forms a cluster with proteins L3 and L19. In the 70S ribosome, L14 and L19 interact and together make contacts with the 16S rRNA in bridges B5 and B8.

In terms of biological role, binds to 23S rRNA. Forms part of two intersubunit bridges in the 70S ribosome. The protein is Large ribosomal subunit protein uL14 of Wolinella succinogenes (strain ATCC 29543 / DSM 1740 / CCUG 13145 / JCM 31913 / LMG 7466 / NCTC 11488 / FDC 602W) (Vibrio succinogenes).